Reading from the N-terminus, the 205-residue chain is High frequency lysogenization protein HflD homolog (205 aa).

Belongs to the HflD family.

The protein localises to the cytoplasm. It localises to the cell inner membrane. This Hahella chejuensis (strain KCTC 2396) protein is High frequency lysogenization protein HflD homolog.